The sequence spans 461 residues: Lysosomal proton-coupled steroid conjugate and bile acid symporter SLC46A3 (461 aa).

Residues 1-25 form the signal peptide; it reads MKIPFVEPVICLSVFAVTLNSPLTT. Over 26–70 the chain is Extracellular; it reads QYVYRRIWEETGNYSIALESNTSECAKNKSSPIFAFQEEVQKKVS. Residues N38, N46, and N53 are each glycosylated (N-linked (GlcNAc...) asparagine). The chain crosses the membrane as a helical span at residues 71–91; that stretch reads LFNLEMDISGLIPGLVSTFVF. Over 92-101 the chain is Cytoplasmic; the sequence is LSHSDHGGRK. Residues 102–124 form a helical membrane-spanning segment; the sequence is FPLILSSVGALANSAWLCLLSYF. Residues 125-133 are Extracellular-facing; the sequence is ALPIQLLIA. A helical transmembrane segment spans residues 134-156; it reads STFIGALFGNYTTFLGASFAYIV. Topologically, residues 157-170 are cytoplasmic; that stretch reads DQCKEKKQRTIRIA. Residues 171–191 traverse the membrane as a helical segment; sequence IIDFLFGVVSGLTGLSSGYFI. Residues 192 to 195 are Extracellular-facing; sequence RGLG. Residues 196-216 traverse the membrane as a helical segment; sequence FVWSFLIVTVALFVNLIYILL. Residues 217 to 261 are Cytoplasmic-facing; that stretch reads FLEDSMKESSSQNISVSWTETFKNLFHRTYMLFKNASGEQQSLCC. The chain crosses the membrane as a helical span at residues 262 to 282; that stretch reads LLLFTMITYFFVTIGVSPIFV. Topologically, residues 283–294 are extracellular; that stretch reads LYELDSPLCWDE. A helical membrane pass occupies residues 295–315; that stretch reads VLIGYGSALGSVTFFSSFLGI. At 316-324 the chain is on the cytoplasmic side; sequence WLFSYCMED. A helical transmembrane segment spans residues 325 to 345; that stretch reads IHMAFIGTFTTMVGMAMTAFA. At 346–347 the chain is on the extracellular side; it reads RT. The chain crosses the membrane as a helical span at residues 348 to 368; sequence TLMMFLVRLPFLFTVMPLSVL. Residues 369–382 are Cytoplasmic-facing; sequence RSMISKVVHSTEQG. Residues 383-403 traverse the membrane as a helical segment; that stretch reads TMFACLAFLETLGGITAVSTF. Residues 404-415 are Extracellular-facing; it reads NGIYSATVAWCK. A helical transmembrane segment spans residues 416-436; that stretch reads GFVFLLSAVLLLIPAISLCVI. At 437 to 461 the chain is on the cytoplasmic side; it reads KYVSRNTGSYVLLIQEESSEDTSDR. A Tyrosine-based lysosomal-sorting motif motif is present at residues 446 to 449; it reads YVLL.

It belongs to the major facilitator superfamily. SLC46A family.

It localises to the lysosome membrane. The enzyme catalyses estrone 3-sulfate(out) + n H(+)(out) = estrone 3-sulfate(in) + n H(+)(in). It carries out the reaction 25-hydroxyvitamin D3 sulfate(out) + n H(+)(out) = 25-hydroxyvitamin D3 sulfate(in) + n H(+)(in). The catalysed reaction is cholate(out) + n H(+)(out) = cholate(in) + n H(+)(in). It catalyses the reaction glycocholate(out) + n H(+)(out) = glycocholate(in) + n H(+)(in). The enzyme catalyses taurocholate(out) + n H(+)(out) = taurocholate(in) + n H(+)(in). It carries out the reaction dehydroepiandrosterone 3-sulfate(out) + n H(+)(out) = dehydroepiandrosterone 3-sulfate(in) + n H(+)(in). The catalysed reaction is N-acetyl-D-muramoyl-L-alanyl-D-isoglutamine(out) + n H(+)(out) = N-acetyl-D-muramoyl-L-alanyl-D-isoglutamine(in) + n H(+)(in). It catalyses the reaction 2',3'-cGAMP(out) + n H(+)(out) = 2',3'-cGAMP(in) + n H(+)(in). In terms of biological role, lysosomal proton-coupled steroid conjugate and bile acid transporter. Preferentially recognizes lipophilic steroid conjugates or bile acis as endogenous substrates and seems to mediate escape from lysosomes to the cytoplasm. Modulates hepatic cytosolic copper homeostasis, maybe acting as a lysosomal copper transporter and sequestering copper ions in the lysosome. Delivers pathogen-associated molecular patterns to cytosolic pattern recognition receptors as part of the innate immune response to microbes. Selectively transports bacterial muramyl dipeptide (MDP) into the cytosol for recognition by NOD2, triggering inflammatory responses. Likely acts as a redundant importer of cyclic GMP-AMP dinucleotides (cGAMPs) in monocyte and macrophage cell lineages. The transport mechanism, its electrogenicity and stoichiometry remain to be elucidated. This Bos taurus (Bovine) protein is Lysosomal proton-coupled steroid conjugate and bile acid symporter SLC46A3 (SLC46A3).